A 183-amino-acid polypeptide reads, in one-letter code: uncharacterized protein (183 aa).

The protein belongs to the asfivirus S183L family.

This is an uncharacterized protein from Ornithodoros (relapsing fever ticks).